Reading from the N-terminus, the 475-residue chain is tRNA-2-methylthio-N(6)-dimethylallyladenosine synthase (475 aa).

The MTTase N-terminal domain maps to 3 to 120 (KKLHIKTWGC…LPEMIDQIKD (118 aa)). [4Fe-4S] cluster-binding residues include Cys-12, Cys-49, Cys-83, Cys-157, Cys-161, and Cys-164. The Radical SAM core domain maps to 143-375 (RAEGPSAFVS…QDRITQQAMR (233 aa)). The TRAM domain maps to 378 to 441 (RQMVGTVQRI…TNSLRGVFIR (64 aa)).

This sequence belongs to the methylthiotransferase family. MiaB subfamily. Monomer. It depends on [4Fe-4S] cluster as a cofactor.

Its subcellular location is the cytoplasm. The catalysed reaction is N(6)-dimethylallyladenosine(37) in tRNA + (sulfur carrier)-SH + AH2 + 2 S-adenosyl-L-methionine = 2-methylsulfanyl-N(6)-dimethylallyladenosine(37) in tRNA + (sulfur carrier)-H + 5'-deoxyadenosine + L-methionine + A + S-adenosyl-L-homocysteine + 2 H(+). Catalyzes the methylthiolation of N6-(dimethylallyl)adenosine (i(6)A), leading to the formation of 2-methylthio-N6-(dimethylallyl)adenosine (ms(2)i(6)A) at position 37 in tRNAs that read codons beginning with uridine. In Shewanella pealeana (strain ATCC 700345 / ANG-SQ1), this protein is tRNA-2-methylthio-N(6)-dimethylallyladenosine synthase.